We begin with the raw amino-acid sequence, 633 residues long: Extracellular metalloproteinase 5 (633 aa).

The N-terminal stretch at 1–21 (MHGLLLAAAGLLSLPLHVVAH) is a signal peptide. The propeptide occupies 22 to 245 (PQPSTSLAGR…HNVVDYVSHA (224 aa)). N-linked (GlcNAc...) asparagine glycosylation is present at Asn-285. His-428 contributes to the Zn(2+) binding site. The active site involves Glu-429. His-432 provides a ligand contact to Zn(2+). Asn-592 and Asn-621 each carry an N-linked (GlcNAc...) asparagine glycan.

Belongs to the peptidase M36 family. Requires Zn(2+) as cofactor.

The protein resides in the secreted. In terms of biological role, secreted metalloproteinase probably acting as a virulence factor. The chain is Extracellular metalloproteinase 5 (MEP5) from Trichophyton rubrum (Athlete's foot fungus).